The primary structure comprises 514 residues: UDP-N-acetylmuramoyl-L-alanyl-D-glutamate--2,6-diaminopimelate ligase (514 aa).

Position 37 (Thr37) interacts with UDP-N-acetyl-alpha-D-muramoyl-L-alanyl-D-glutamate. 125 to 131 (GTNGKTS) lines the ATP pocket. UDP-N-acetyl-alpha-D-muramoyl-L-alanyl-D-glutamate-binding positions include 167 to 168 (TT), Ser194, Gln200, and Arg202. Residue Lys234 is modified to N6-carboxylysine. Meso-2,6-diaminopimelate contacts are provided by residues Arg406, 430–433 (DNPR), Gly481, and Glu485. Positions 430 to 433 (DNPR) match the Meso-diaminopimelate recognition motif motif.

Belongs to the MurCDEF family. MurE subfamily. Requires Mg(2+) as cofactor. Post-translationally, carboxylation is probably crucial for Mg(2+) binding and, consequently, for the gamma-phosphate positioning of ATP.

The protein localises to the cytoplasm. The catalysed reaction is UDP-N-acetyl-alpha-D-muramoyl-L-alanyl-D-glutamate + meso-2,6-diaminopimelate + ATP = UDP-N-acetyl-alpha-D-muramoyl-L-alanyl-gamma-D-glutamyl-meso-2,6-diaminopimelate + ADP + phosphate + H(+). Its pathway is cell wall biogenesis; peptidoglycan biosynthesis. In terms of biological role, catalyzes the addition of meso-diaminopimelic acid to the nucleotide precursor UDP-N-acetylmuramoyl-L-alanyl-D-glutamate (UMAG) in the biosynthesis of bacterial cell-wall peptidoglycan. The sequence is that of UDP-N-acetylmuramoyl-L-alanyl-D-glutamate--2,6-diaminopimelate ligase from Ralstonia nicotianae (strain ATCC BAA-1114 / GMI1000) (Ralstonia solanacearum).